Reading from the N-terminus, the 360-residue chain is MIIWLAELLQPYLSFFRLFEYLSFRAILSVLTALGLSLWMGPIMIKRLQMLQIGQVVRNEGPESHFSKRGTPTMGGIMILAAISITILLWTDLSNPYVWAVLTVLLGYGAVGFVDDYRKVVRKNTDGLIARWKYFWQSLIAFVVAFALYAYGKDTAATQLVVPFFKDVMPQLGLMYIILTYFVIVGTSNAVNLTDGLDGLAIMPTVLVAAGFAVIAWATGNVNFSEYLHIPYLPHASELVVVCTAIVGAGLGFLWFNTYPAQVFMGDVGSLALGGALGTIAVLVRQELVLVIMGGVFVMETLSVILQVGSYKLRGQRIFRMAPIHHHYELKGWPEPRVIVRFWIISMVLVLIGLATLKVR.

The next 10 membrane-spanning stretches (helical) occupy residues 26–46 (AILSVLTALGLSLWMGPIMIK), 70–90 (GTPTMGGIMILAAISITILLW), 94–114 (SNPYVWAVLTVLLGYGAVGFV), 132–152 (WKYFWQSLIAFVVAFALYAYG), 168–188 (VMPQLGLMYIILTYFVIVGTS), 199–219 (GLAIMPTVLVAAGFAVIAWAT), 236–256 (ASELVVVCTAIVGAGLGFLWF), 263–283 (VFMGDVGSLALGGALGTIAVL), 288–308 (LVLVIMGGVFVMETLSVILQV), and 338–358 (VIVRFWIISMVLVLIGLATLK).

The protein belongs to the glycosyltransferase 4 family. MraY subfamily. Mg(2+) is required as a cofactor.

The protein resides in the cell inner membrane. The enzyme catalyses UDP-N-acetyl-alpha-D-muramoyl-L-alanyl-gamma-D-glutamyl-meso-2,6-diaminopimeloyl-D-alanyl-D-alanine + di-trans,octa-cis-undecaprenyl phosphate = di-trans,octa-cis-undecaprenyl diphospho-N-acetyl-alpha-D-muramoyl-L-alanyl-D-glutamyl-meso-2,6-diaminopimeloyl-D-alanyl-D-alanine + UMP. The protein operates within cell wall biogenesis; peptidoglycan biosynthesis. In terms of biological role, catalyzes the initial step of the lipid cycle reactions in the biosynthesis of the cell wall peptidoglycan: transfers peptidoglycan precursor phospho-MurNAc-pentapeptide from UDP-MurNAc-pentapeptide onto the lipid carrier undecaprenyl phosphate, yielding undecaprenyl-pyrophosphoryl-MurNAc-pentapeptide, known as lipid I. This chain is Phospho-N-acetylmuramoyl-pentapeptide-transferase, found in Vibrio parahaemolyticus serotype O3:K6 (strain RIMD 2210633).